A 467-amino-acid chain; its full sequence is UDP-N-acetylmuramate--L-alanine ligase (467 aa).

114-120 (GTHGKTT) is a binding site for ATP.

The protein belongs to the MurCDEF family.

It localises to the cytoplasm. The catalysed reaction is UDP-N-acetyl-alpha-D-muramate + L-alanine + ATP = UDP-N-acetyl-alpha-D-muramoyl-L-alanine + ADP + phosphate + H(+). It functions in the pathway cell wall biogenesis; peptidoglycan biosynthesis. In terms of biological role, cell wall formation. This chain is UDP-N-acetylmuramate--L-alanine ligase, found in Bradyrhizobium sp. (strain ORS 278).